The sequence spans 465 residues: 3-isopropylmalate dehydratase large subunit (465 aa).

Residues Cys347, Cys407, and Cys410 each coordinate [4Fe-4S] cluster.

It belongs to the aconitase/IPM isomerase family. LeuC type 1 subfamily. As to quaternary structure, heterodimer of LeuC and LeuD. Requires [4Fe-4S] cluster as cofactor.

The catalysed reaction is (2R,3S)-3-isopropylmalate = (2S)-2-isopropylmalate. The protein operates within amino-acid biosynthesis; L-leucine biosynthesis; L-leucine from 3-methyl-2-oxobutanoate: step 2/4. In terms of biological role, catalyzes the isomerization between 2-isopropylmalate and 3-isopropylmalate, via the formation of 2-isopropylmaleate. The chain is 3-isopropylmalate dehydratase large subunit from Buchnera aphidicola subsp. Pemphigus spyrothecae.